The following is a 155-amino-acid chain: Ubiquitin-conjugating enzyme E2 14 (155 aa).

One can recognise a UBC core domain in the interval 7 to 154; it reads SSSRRLTKEY…ARDYVEQFAK (148 aa). Catalysis depends on Cys91, which acts as the Glycyl thioester intermediate.

It belongs to the ubiquitin-conjugating enzyme family.

The catalysed reaction is S-ubiquitinyl-[E1 ubiquitin-activating enzyme]-L-cysteine + [E2 ubiquitin-conjugating enzyme]-L-cysteine = [E1 ubiquitin-activating enzyme]-L-cysteine + S-ubiquitinyl-[E2 ubiquitin-conjugating enzyme]-L-cysteine.. It functions in the pathway protein modification; protein ubiquitination. Catalyzes the covalent attachment of ubiquitin to other proteins. Mediates the selective degradation of short-lived and abnormal proteins. This chain is Ubiquitin-conjugating enzyme E2 14 (ubc14), found in Schizosaccharomyces pombe (strain 972 / ATCC 24843) (Fission yeast).